Reading from the N-terminus, the 339-residue chain is Very-long-chain 3-oxoacyl-CoA reductase (339 aa).

A helical membrane pass occupies residues 21–41 (WTTFLLALGSFNALRIIYQTL). Valine 67, asparagine 96, aspartate 121, asparagine 148, tyrosine 215, lysine 219, valine 248, and serine 250 together coordinate NADP(+). Tyrosine 215 (proton acceptor) is an active-site residue. Catalysis depends on lysine 219, which acts as the Lowers pKa of active site Tyr.

It belongs to the short-chain dehydrogenases/reductases (SDR) family.

The protein resides in the endoplasmic reticulum membrane. The catalysed reaction is a very-long-chain (3R)-3-hydroxyacyl-CoA + NADP(+) = a very-long-chain 3-oxoacyl-CoA + NADPH + H(+). It participates in lipid metabolism; fatty acid biosynthesis. Its function is as follows. Component of the microsomal membrane bound fatty acid elongation system, which produces the 26-carbon very long-chain fatty acids (VLCFA) from palmitate. Catalyzes the reduction of the 3-ketoacyl-CoA intermediate that is formed in each cycle of fatty acid elongation. VLCFAs serve as precursors for ceramide and sphingolipids. The polypeptide is Very-long-chain 3-oxoacyl-CoA reductase (Coprinopsis cinerea (strain Okayama-7 / 130 / ATCC MYA-4618 / FGSC 9003) (Inky cap fungus)).